The primary structure comprises 675 residues: PTS system glucose-specific EIICBA component (675 aa).

A PTS EIIC type-1 domain is found at 3-414 (KKLFGQLQRI…FNFKTPGRED (412 aa)). A run of 11 helical transmembrane segments spans residues 16–36 (LMLP…GTAF), 59–79 (MMTG…ALGV), 81–101 (IGLA…FIIM), 126–146 (VLGI…GALA), 173–193 (IMMA…WPFI), 199–219 (AFST…FGFI), 273–293 (FMQG…LAIY), 303–323 (VVGG…ITEP), 328–348 (FLFV…LSFL), 355–375 (LHLG…GILP), and 378–398 (TPWW…YVVF). In terms of domain architecture, PTS EIIB type-1 spans 425–506 (SKLPFDVLDA…ARIMNGDITK (82 aa)). C447 acts as the Phosphocysteine intermediate; for EIIB activity in catalysis. The 105-residue stretch at 547-651 (DKVFSEKMMG…SVVTPVIITN (105 aa)) folds into the PTS EIIA type-1 domain. Catalysis depends on H599, which acts as the Tele-phosphohistidine intermediate; for EIIA activity.

The protein resides in the cell membrane. The catalysed reaction is N(pros)-phospho-L-histidyl-[protein] + D-glucose(out) = D-glucose 6-phosphate(in) + L-histidyl-[protein]. Functionally, the phosphoenolpyruvate-dependent sugar phosphotransferase system (sugar PTS), a major carbohydrate active transport system, catalyzes the phosphorylation of incoming sugar substrates concomitantly with their translocation across the cell membrane. This system is involved in glucose transport. In Staphylococcus haemolyticus (strain JCSC1435), this protein is PTS system glucose-specific EIICBA component (ptsG).